The chain runs to 315 residues: Acetyl-coenzyme A carboxylase carboxyl transferase subunit alpha (315 aa).

The 255-residue stretch at 38–292 (RLQKKSNELT…KLRLKEDLAE (255 aa)) folds into the CoA carboxyltransferase C-terminal domain.

Belongs to the AccA family. In terms of assembly, acetyl-CoA carboxylase is a heterohexamer composed of biotin carboxyl carrier protein (AccB), biotin carboxylase (AccC) and two subunits each of ACCase subunit alpha (AccA) and ACCase subunit beta (AccD).

The protein resides in the cytoplasm. The enzyme catalyses N(6)-carboxybiotinyl-L-lysyl-[protein] + acetyl-CoA = N(6)-biotinyl-L-lysyl-[protein] + malonyl-CoA. Its pathway is lipid metabolism; malonyl-CoA biosynthesis; malonyl-CoA from acetyl-CoA: step 1/1. Its function is as follows. Component of the acetyl coenzyme A carboxylase (ACC) complex. First, biotin carboxylase catalyzes the carboxylation of biotin on its carrier protein (BCCP) and then the CO(2) group is transferred by the carboxyltransferase to acetyl-CoA to form malonyl-CoA. This Haemophilus influenzae (strain PittEE) protein is Acetyl-coenzyme A carboxylase carboxyl transferase subunit alpha.